Reading from the N-terminus, the 91-residue chain is Cell division protein FtsB (91 aa).

The Cytoplasmic segment spans residues 1–3 (MRW). The helical transmembrane segment at 4–21 (PVIILAVLVVVLQYPLWL) threads the bilayer. The Periplasmic segment spans residues 22–91 (GKGGWLRVWE…EIFVQVPQKH (70 aa)). Residues 28 to 72 (RVWEVDRKLHEQREENTRLEERNAGLDAEVRDLKSGNEAIEERAR) are a coiled coil.

It belongs to the FtsB family. In terms of assembly, part of a complex composed of FtsB, FtsL and FtsQ.

Its subcellular location is the cell inner membrane. In terms of biological role, essential cell division protein. May link together the upstream cell division proteins, which are predominantly cytoplasmic, with the downstream cell division proteins, which are predominantly periplasmic. The chain is Cell division protein FtsB from Azoarcus sp. (strain BH72).